We begin with the raw amino-acid sequence, 311 residues long: uncharacterized protein (311 aa).

Residues 168–188 (FNVMKGAILGLPIIGGIIVGV) form a helical membrane-spanning segment.

The protein resides in the cell membrane. This is an uncharacterized protein from Edwardsiella tarda.